We begin with the raw amino-acid sequence, 38 residues long: Potassium channel toxin alpha-KTx 2.15 (38 aa).

Intrachain disulfides connect Cys7–Cys29, Cys13–Cys34, and Cys17–Cys36.

It belongs to the short scorpion toxin superfamily. Potassium channel inhibitor family. Alpha-KTx 02 subfamily. Expressed by the venom gland.

The protein resides in the secreted. Functionally, blocks human voltage-gated potassium channels Kv1.2/KCNA2 (IC(50)=0.3 nM), Kv1.3/KCNA3 (IC(50)=8.3 nM) and Shaker IR (with inactivation domain removed) (IC(50)=12 nM) and blocks intermediate conductance calcium-activated potassium channel KCa3.1/KCNN4 (IC(50)=6.4 nM). The sequence is that of Potassium channel toxin alpha-KTx 2.15 from Centruroides tecomanus (Scorpion).